We begin with the raw amino-acid sequence, 515 residues long: 2-isopropylmalate synthase (515 aa).

Positions valine 4–glutamine 264 constitute a Pyruvate carboxyltransferase domain. Positions 13, 201, 203, and 237 each coordinate Mn(2+). Positions glutamate 390–isoleucine 515 are regulatory domain.

Belongs to the alpha-IPM synthase/homocitrate synthase family. LeuA type 1 subfamily. Homodimer. Requires Mn(2+) as cofactor.

Its subcellular location is the cytoplasm. The catalysed reaction is 3-methyl-2-oxobutanoate + acetyl-CoA + H2O = (2S)-2-isopropylmalate + CoA + H(+). Its pathway is amino-acid biosynthesis; L-leucine biosynthesis; L-leucine from 3-methyl-2-oxobutanoate: step 1/4. In terms of biological role, catalyzes the condensation of the acetyl group of acetyl-CoA with 3-methyl-2-oxobutanoate (2-ketoisovalerate) to form 3-carboxy-3-hydroxy-4-methylpentanoate (2-isopropylmalate). In Halothermothrix orenii (strain H 168 / OCM 544 / DSM 9562), this protein is 2-isopropylmalate synthase.